Here is a 163-residue protein sequence, read N- to C-terminus: Endoribonuclease YbeY (163 aa).

Zn(2+)-binding residues include His-121, His-125, and His-131.

Belongs to the endoribonuclease YbeY family. Requires Zn(2+) as cofactor.

It localises to the cytoplasm. Its function is as follows. Single strand-specific metallo-endoribonuclease involved in late-stage 70S ribosome quality control and in maturation of the 3' terminus of the 16S rRNA. This is Endoribonuclease YbeY from Synechococcus sp. (strain JA-3-3Ab) (Cyanobacteria bacterium Yellowstone A-Prime).